Reading from the N-terminus, the 44-residue chain is Cytochrome b559 subunit beta (44 aa).

The helical transmembrane segment at 19–35 threads the bilayer; the sequence is WLAIHGLAIPTVFFLGA. Position 23 (His23) interacts with heme.

Belongs to the PsbE/PsbF family. Heterodimer of an alpha subunit and a beta subunit. PSII is composed of 1 copy each of membrane proteins PsbA, PsbB, PsbC, PsbD, PsbE, PsbF, PsbH, PsbI, PsbJ, PsbK, PsbL, PsbM, PsbT, PsbX, PsbY, PsbZ, Psb30/Ycf12, at least 3 peripheral proteins of the oxygen-evolving complex and a large number of cofactors. It forms dimeric complexes. Requires heme b as cofactor.

Its subcellular location is the plastid. It localises to the chloroplast thylakoid membrane. In terms of biological role, this b-type cytochrome is tightly associated with the reaction center of photosystem II (PSII). PSII is a light-driven water:plastoquinone oxidoreductase that uses light energy to abstract electrons from H(2)O, generating O(2) and a proton gradient subsequently used for ATP formation. It consists of a core antenna complex that captures photons, and an electron transfer chain that converts photonic excitation into a charge separation. The sequence is that of Cytochrome b559 subunit beta from Porphyra purpurea (Red seaweed).